Here is a 108-residue protein sequence, read N- to C-terminus: Protein YcgL (108 aa).

In terms of domain architecture, YcgL spans 12–96 (MFCVIYRSSK…PPEDLLKQHL (85 aa)).

The protein is Protein YcgL of Shigella sonnei (strain Ss046).